The primary structure comprises 404 residues: Cysteine desulfurase IscS (404 aa).

Residues 75–76, asparagine 155, glutamine 183, and 203–205 contribute to the pyridoxal 5'-phosphate site; these read AT and SAH. An N6-(pyridoxal phosphate)lysine modification is found at lysine 206. Threonine 243 contacts pyridoxal 5'-phosphate. The active-site Cysteine persulfide intermediate is the cysteine 328. Cysteine 328 lines the [2Fe-2S] cluster pocket.

The protein belongs to the class-V pyridoxal-phosphate-dependent aminotransferase family. NifS/IscS subfamily. Homodimer. Forms a heterotetramer with IscU, interacts with other sulfur acceptors. It depends on pyridoxal 5'-phosphate as a cofactor.

It is found in the cytoplasm. It catalyses the reaction (sulfur carrier)-H + L-cysteine = (sulfur carrier)-SH + L-alanine. The protein operates within cofactor biosynthesis; iron-sulfur cluster biosynthesis. Functionally, master enzyme that delivers sulfur to a number of partners involved in Fe-S cluster assembly, tRNA modification or cofactor biosynthesis. Catalyzes the removal of elemental sulfur atoms from cysteine to produce alanine. Functions as a sulfur delivery protein for Fe-S cluster synthesis onto IscU, an Fe-S scaffold assembly protein, as well as other S acceptor proteins. The protein is Cysteine desulfurase IscS of Neisseria meningitidis serogroup C (strain 053442).